A 607-amino-acid chain; its full sequence is Large ribosomal subunit assembly factor BipA (607 aa).

The tr-type G domain occupies 3–198 (HSIRNIAIIA…SIIKYAPAPN (196 aa)). Residues 15–20 (DHGKTT) and 128–131 (NKID) each bind GTP.

Belongs to the TRAFAC class translation factor GTPase superfamily. Classic translation factor GTPase family. BipA subfamily. Monomer.

It localises to the cytoplasm. The enzyme catalyses GTP + H2O = GDP + phosphate + H(+). Functionally, a 50S ribosomal subunit assembly protein with GTPase activity, required for 50S subunit assembly at low temperatures, may also play a role in translation. Binds GTP and analogs. Binds the 70S ribosome between the 30S and 50S subunits, in a similar position as ribosome-bound EF-G; it contacts a number of ribosomal proteins, both rRNAs and the A-site tRNA. The polypeptide is Large ribosomal subunit assembly factor BipA (Buchnera aphidicola subsp. Acyrthosiphon pisum (strain APS) (Acyrthosiphon pisum symbiotic bacterium)).